The primary structure comprises 2967 residues: BEACH domain-containing protein lvsD (2967 aa).

Disordered regions lie at residues 1 to 25 (MSSP…RIGG), 322 to 364 (NNNN…SSNS), 588 to 615 (ILSI…QQQL), 917 to 936 (NNSN…NNIN), 1077 to 1105 (GGSN…KDKD), 1173 to 1220 (NTSS…SDHR), 1583 to 1613 (NNNS…NNEN), 1831 to 1859 (QQQQ…SSVV), 1921 to 2009 (PQKT…TLNN), and 2029 to 2062 (KSTL…NNKN). The BEACH 1 domain occupies 229 to 491 (MTFRKAPSSV…QDLFRKGSNY (263 aa)). Positions 1079–1092 (SNNNNNNNNNNSNN) are enriched in low complexity. Residues 1093 to 1105 (NKDKIDSNNKDKD) are compositionally biased toward basic and acidic residues. 6 stretches are compositionally biased toward low complexity: residues 1185-1194 (PLLTSTKSMS), 1583-1611 (NNNS…LNNN), 1831-1857 (QQQQ…SSSS), 1926-1980 (QNQH…SFSN), 1993-2006 (NIIT…TTST), and 2034-2062 (SSSS…NNKN). A BEACH-type PH domain is found at 2060–2162 (NKNIKLEFST…ICAQILKLIG (103 aa)). BEACH domains are found at residues 2202 to 2492 (TPQQ…HPQR) and 2628 to 2785 (NSRV…IYSN). WD repeat units lie at residues 2658–2710 (NHKS…SDHH) and 2720–2761 (GHNF…KSIQ). Disordered stretches follow at residues 2798–2820 (SATT…SSNT) and 2915–2934 (PSTS…NNGN). Low complexity-rich tracts occupy residues 2811–2820 (SSSSLSSSNT) and 2924–2934 (NSNNNNNNNGN).

The polypeptide is BEACH domain-containing protein lvsD (lvsD) (Dictyostelium discoideum (Social amoeba)).